Here is a 197-residue protein sequence, read N- to C-terminus: Putative mediator of RNA polymerase II transcription subunit 9 (197 aa).

The stretch at 83 to 117 forms a coiled coil; sequence GINRSLENQEELLKTYKQTLKKKVELLEKLKKLEI. Positions 126–144 are enriched in polar residues; it reads STSSQSPQIQSKLELQTEL. Positions 126 to 197 are disordered; that stretch reads STSSQSPQIQ…KETTEDIMKE (72 aa). Residues 145–182 show a composition bias toward low complexity; that stretch reads SQTEPSQTEPSQTEPSQTEPSQTESSQIESSQIESSQT. Positions 183–197 are enriched in basic and acidic residues; that stretch reads ETEKSKETTEDIMKE.

The protein belongs to the Mediator complex subunit 9 family. Component of the Mediator complex.

The protein resides in the nucleus. Functionally, component of the Mediator complex, a coactivator involved in the regulated transcription of nearly all RNA polymerase II-dependent genes. Mediator functions as a bridge to convey information from gene-specific regulatory proteins to the basal RNA polymerase II transcription machinery. Mediator is recruited to promoters by direct interactions with regulatory proteins and serves as a scaffold for the assembly of a functional preinitiation complex with RNA polymerase II and the general transcription factors. This is Putative mediator of RNA polymerase II transcription subunit 9 (med9) from Dictyostelium discoideum (Social amoeba).